The chain runs to 447 residues: Dihydroorotase (447 aa).

Zn(2+) is bound by residues H81 and H83. Residues 83-85 (HFR) and N115 contribute to the substrate site. The Zn(2+) site is built by D171, H198, and H252. Residue N298 participates in substrate binding. Zn(2+) is bound at residue D325. D325 is an active-site residue. Substrate is bound by residues H329 and 343-344 (FG).

This sequence belongs to the metallo-dependent hydrolases superfamily. DHOase family. Class I DHOase subfamily. Zn(2+) serves as cofactor.

The catalysed reaction is (S)-dihydroorotate + H2O = N-carbamoyl-L-aspartate + H(+). It participates in pyrimidine metabolism; UMP biosynthesis via de novo pathway; (S)-dihydroorotate from bicarbonate: step 3/3. In terms of biological role, catalyzes the reversible cyclization of carbamoyl aspartate to dihydroorotate. The polypeptide is Dihydroorotase (Ehrlichia chaffeensis (strain ATCC CRL-10679 / Arkansas)).